We begin with the raw amino-acid sequence, 110 residues long: Large ribosomal subunit protein uL22 (110 aa).

The protein belongs to the universal ribosomal protein uL22 family. As to quaternary structure, part of the 50S ribosomal subunit.

Its function is as follows. This protein binds specifically to 23S rRNA; its binding is stimulated by other ribosomal proteins, e.g. L4, L17, and L20. It is important during the early stages of 50S assembly. It makes multiple contacts with different domains of the 23S rRNA in the assembled 50S subunit and ribosome. Functionally, the globular domain of the protein is located near the polypeptide exit tunnel on the outside of the subunit, while an extended beta-hairpin is found that lines the wall of the exit tunnel in the center of the 70S ribosome. In Shewanella baltica (strain OS223), this protein is Large ribosomal subunit protein uL22.